The chain runs to 841 residues: Outer membrane usher protein MyfC (841 aa).

The signal sequence occupies residues 1 to 26; the sequence is MFFSLKNSVAKLIAFWAICLVLPVWA. Cys817 and Cys840 are disulfide-bonded.

Belongs to the fimbrial export usher family.

It localises to the cell outer membrane. Its function is as follows. Involved in the export and assembly of the MyfA fimbrial subunit. In Yersinia enterocolitica, this protein is Outer membrane usher protein MyfC (myfC).